The primary structure comprises 774 residues: Transforming acidic coiled-coil-containing protein 1 (774 aa).

At A2 the chain carries N-acetylalanine. The segment at 2–56 (AFSPWQILSPVQWAKWTWSAVRGSGAGEDEAGGPEGDPEEEEDSQAETKSLSFSS) is interaction with LSM7 and SNRPG. Phosphoserine is present on residues S4, S10, and S45. Positions 21–142 (AVRGSGAGED…VKDVRGKAEH (122 aa)) are disordered. Residues 28–46 (GEDEAGGPEGDPEEEEDSQ) show a composition bias toward acidic residues. Positions 48–61 (ETKSLSFSSDSEGN) are enriched in polar residues. Residues 88–99 (PEAKPQESREAD) show a composition bias toward basic and acidic residues. The span at 113–128 (DTCSRSSENEAPQATV) shows a compositional bias: polar residues. Basic and acidic residues predominate over residues 131–142 (HPVKDVRGKAEH). Residues S148 and S154 each carry the phosphoserine modification. The segment at 153–255 (FSIETRNCTD…PEMLMEGSPL (103 aa)) is interaction with TDRD7. Positions 207 to 424 (EAFTEASLKT…NNINTDDSGD (218 aa)) are interaction with YEATS4. Positions 214-428 (LKTGGPCPEP…TDDSGDPCKP (215 aa)) are disordered. 2 consecutive SPAZ domains span residues 216 to 294 (TGGP…TAGV) and 354 to 504 (SKPV…TDEE). S228 is subject to Phosphoserine; by AURKC. The segment covering 228-241 (SKLRKPKPVSLRKK) has biased composition (basic residues). 2 positions are modified to phosphoserine: S376 and S401. Residues 397 to 407 (ILQNSPPLSSK) are compositionally biased toward polar residues. A Bipartite nuclear localization signal motif is present at residues 452–468 (PKKAKSRLITSGCKVKK). Residues S480 and S560 each carry the phosphoserine modification. The stretch at 579 to 774 (IREEIITKEI…ELIAKLGKTD (196 aa)) forms a coiled coil. Residues 670–774 (VLEGFKKNEE…ELIAKLGKTD (105 aa)) form an interaction with CH-TOG region.

The protein belongs to the TACC family. As to quaternary structure, interacts with CH-TOG and YEATS4. Interacts with the AURKA and AURKB and AURKC. Interacts with LSM7, TDRD7 and SNRPG. Interacts with GCN5L2 and PCAF. Interacts with the thyroid hormone receptors THRB and THRA, predominantly with isoform alpha-2. The interaction with THRA isoform alpha-1 and THRB is decreased in the presence of thyroid hormone T3. Interacts with RARA in the nucleus. Also interacts with other nuclear receptors, including ESR1, NR3C1, PPARG and RXRA, preferentially in the absence of their hormonal ligands.

Its subcellular location is the cytoplasm. The protein localises to the nucleus. It localises to the cytoskeleton. The protein resides in the microtubule organizing center. It is found in the centrosome. Its subcellular location is the midbody. Functionally, involved in transcription regulation induced by nuclear receptors, including in T3 thyroid hormone and all-trans retinoic acid pathways. Might promote the nuclear localization of the receptors. Likely involved in the processes that promote cell division prior to the formation of differentiated tissues. This Mus musculus (Mouse) protein is Transforming acidic coiled-coil-containing protein 1 (Tacc1).